Here is a 186-residue protein sequence, read N- to C-terminus: Putative manganese efflux pump MntP (186 aa).

Helical transmembrane passes span 1–21 (MSFL…FAVS), 41–61 (VFFG…GSAV), 71–91 (WIAF…ALYG), 105–125 (LLML…SFAF), 130–150 (ILEP…CGAV), and 165–185 (IIGG…HLLW).

It belongs to the MntP (TC 9.B.29) family.

Its subcellular location is the cell membrane. Functionally, probably functions as a manganese efflux pump. The polypeptide is Putative manganese efflux pump MntP (Methanosarcina barkeri (strain Fusaro / DSM 804)).